The following is a 420-amino-acid chain: Serine hydroxymethyltransferase (420 aa).

Residues Leu123 and 127 to 129 (GHL) each bind (6S)-5,6,7,8-tetrahydrofolate. An N6-(pyridoxal phosphate)lysine modification is found at Lys232. Position 357–359 (357–359 (SPF)) interacts with (6S)-5,6,7,8-tetrahydrofolate.

Belongs to the SHMT family. In terms of assembly, homodimer. Requires pyridoxal 5'-phosphate as cofactor.

It is found in the cytoplasm. It catalyses the reaction (6R)-5,10-methylene-5,6,7,8-tetrahydrofolate + glycine + H2O = (6S)-5,6,7,8-tetrahydrofolate + L-serine. Its pathway is one-carbon metabolism; tetrahydrofolate interconversion. The protein operates within amino-acid biosynthesis; glycine biosynthesis; glycine from L-serine: step 1/1. In terms of biological role, catalyzes the reversible interconversion of serine and glycine with tetrahydrofolate (THF) serving as the one-carbon carrier. This reaction serves as the major source of one-carbon groups required for the biosynthesis of purines, thymidylate, methionine, and other important biomolecules. Also exhibits THF-independent aldolase activity toward beta-hydroxyamino acids, producing glycine and aldehydes, via a retro-aldol mechanism. In Streptococcus pyogenes serotype M2 (strain MGAS10270), this protein is Serine hydroxymethyltransferase.